The chain runs to 107 residues: uncharacterized protein (107 aa).

Positions 88–97 (EEKKEKDKGK) are enriched in basic and acidic residues. Positions 88 to 107 (EEKKEKDKGKKGLLSRLKFW) are disordered. Residues 98 to 107 (KGLLSRLKFW) are compositionally biased toward basic residues.

This is an uncharacterized protein from Methanocaldococcus jannaschii (strain ATCC 43067 / DSM 2661 / JAL-1 / JCM 10045 / NBRC 100440) (Methanococcus jannaschii).